The chain runs to 707 residues: MPEYIKRKFGDQTIVFETGKLAKFADGSVTVSYGETAVLVTAVSVTELKEDQDFLPLQVEYREKAAAAGRFPGGYFRKEGRPTDKEILTSRMIDRPLRPLFPKGYFYETQILGTLLSADGQNDPDVMAINGASAALMVSDIPFYGPVGAVRIGQIDGRWIINPTHREREISDIDLVYVGSEHYPLMIEGSAREFPEEEFVKALEFAHQHVQEVIAAQKELAEKVGKPKRSCVLFEENLAITNRLAELYSSQLQDALYTSSKTERQKKLAKLKEELTAKILEEFPTATPREITSSYDSLQKTIFRTNVLETKRRCDGRGPEDIRPIAIETSVVPRSHGSSLFCRGETQALCMATLASLNEAQELDAYGGGEQSKRFLLHYFFPPFSVGEVGRITGQSRREIGHGALAERSLLPVIPSETDFPYAIRVSSEILESNGSTSMATVCGGSLALMDAGVPLKTSVAGISVGLVKGKEEDFDWSRYCLLTDILGLEDHYGDMDFKIAGTRKGITGFQLDLKLRGIPLDVMAKAIFQSQKARMVILDCMDKVINAPRAEISKHAPRIEKIKIHPDKIGLLIGPGGKTIKKISAESGAEITIEDDGTVMIYSSSADSLEAAREMIEDMVGEVTVGGIYRSKVVSVKDFGCFIEIKGKGEGLVHISELSDTPVRRVDQVVRVGEEIWVKCIGVDEKGRYKFSRKAAMKELHAKRMQ.

Residues Asp491 and Asp497 each coordinate Mg(2+). Positions 558–617 constitute a KH domain; the sequence is PRIEKIKIHPDKIGLLIGPGGKTIKKISAESGAEITIEDDGTVMIYSSSADSLEAAREMI. Residues 622–695 form the S1 motif domain; sequence GEVTVGGIYR…EKGRYKFSRK (74 aa).

The protein belongs to the polyribonucleotide nucleotidyltransferase family. Mg(2+) is required as a cofactor.

It localises to the cytoplasm. The catalysed reaction is RNA(n+1) + phosphate = RNA(n) + a ribonucleoside 5'-diphosphate. Its function is as follows. Involved in mRNA degradation. Catalyzes the phosphorolysis of single-stranded polyribonucleotides processively in the 3'- to 5'-direction. This is Polyribonucleotide nucleotidyltransferase from Methylacidiphilum infernorum (isolate V4) (Methylokorus infernorum (strain V4)).